The primary structure comprises 336 residues: Aldehyde reductase AdhA (336 aa).

Residues Cys36, Cys39, His61, Cys92, Cys95, Cys98, Cys106, and Cys148 each coordinate Zn(2+).

Belongs to the zinc-containing alcohol dehydrogenase family. In terms of assembly, homotetramer. Requires Zn(2+) as cofactor.

It localises to the cytoplasm. It carries out the reaction a primary alcohol + NADP(+) = an aldehyde + NADPH + H(+). Its function is as follows. Active on a wide variety of primary alcohols and their corresponding aldehydes, but not against ketones nor secondary alcohols. Active on aliphatic compounds up to 5 carbons in length and aromatic alcohols, less effective on branched-chain primary alcohols. Prefers NADPH to NADH. Its catalytic efficiency is greatest for aldehydes, suggesting the reduction of aromatic and medium-chain aliphatic aldehydes is its in vivo activity. Plays a role in tolerance to internally produced ethanol. This Synechocystis sp. (strain ATCC 27184 / PCC 6803 / Kazusa) protein is Aldehyde reductase AdhA.